We begin with the raw amino-acid sequence, 634 residues long: Threonine--tRNA ligase (634 aa).

The TGS domain maps to 1-61 (MINIRFPDGS…NSNCELRLIT (61 aa)). Residues 241 to 532 (DHRKIGKVLD…LIEHYAGNLP (292 aa)) are catalytic. Residues C332, H383, and H509 each contribute to the Zn(2+) site.

Belongs to the class-II aminoacyl-tRNA synthetase family. As to quaternary structure, homodimer. It depends on Zn(2+) as a cofactor.

The protein localises to the cytoplasm. The catalysed reaction is tRNA(Thr) + L-threonine + ATP = L-threonyl-tRNA(Thr) + AMP + diphosphate + H(+). In terms of biological role, catalyzes the attachment of threonine to tRNA(Thr) in a two-step reaction: L-threonine is first activated by ATP to form Thr-AMP and then transferred to the acceptor end of tRNA(Thr). Also edits incorrectly charged L-seryl-tRNA(Thr). The protein is Threonine--tRNA ligase of Francisella tularensis subsp. mediasiatica (strain FSC147).